Here is a 1011-residue protein sequence, read N- to C-terminus: MAETGDKPYRAEYAKSGRASCKKCGESIAKDSLRLALMVQSPMFDGKVPHWHHYSCFWKRARIVSHTDIDGFPELRWEDQEKIKKAIETGALQEEKGGTRKEVGKAEKSLTDFAAEYAKSNRSTCKGCEQKIEKGQIRISKKMVHPEKPQLGMIDNWYHPDCFVSRRAELGFLPAYGATQLLGFSILKAEDKETLKKQLPATKTEGKRKGEEVDGNVVAKKKSRKEKEKESKQEKQLKEQTELIWGIKDELRKVCSTNDLKELLIANKQEVPSGENAILDRVADGMAFGALLPCEECKGQFVFKSDAYYCSGDITAWTKCVAKTQTPNRKDWVIPKEFREIPYLKKFKCKKQDRIFPPEAATVNSAPPPPASAPLTETVTAPQDKPLTNMKILTLGKLSKNKEEVKNIVEELGGKMTTTANKATLCISTQKEVEKMSKKMEEVKDAKVRVVSEEFLKDVKSSNKGFQELLSLHAISPWGAEVKTEHQEVAVDGKCSKPANMKSAGKVKEEQGPSKSEKKMKLTVKGGAAVDPDSGLEDSAHVFEKGGKIFSATLGLVDIVKGTNSYYKLQLLEDDRESRYWVFRSWGRVGTVIGSNKLEQMPSKEDAVEHFLNLYEEKTGNSWHSKNFTKYPKKFYPLEIDYGQDEEAVRKLTVSAGTKSKLAKPIQDLIKMIFDVESMKKAMVEFEIDLQKMPLGKLSKRQIQSAYSILNEVQQAVSDGGSESQILDLSNRFYTLIPHDFGMKKPPLLSNLEYIQAKVQMLDNLLDIEVAYSLLRGGNEDGDKDPIDINYEKLRTDIKVVDKDSEEAKIIKQYVKNTHAATHNAYDLKVVEIFRIEREGESQRYKPFKQLHNRQLLWHGSRTTNFAGILSQGLRIAPPEAPVTGYMFGKGIYFADMVSKSANYCHTSQADPIGLILLGEVALGNMYELKNASHITKLPKGKHSVKGLGKTAPDPTATTTLDGVEVPLGNGISTGINDTCLLYNEYIVYDVAQVNLKYLLKLKFNYKTSLW.

PARP-type zinc fingers lie at residues 9–91 (YRAE…ETGA) and 113–203 (FAAE…PATK). Residues Cys21, Cys24, His53, Cys56, Cys125, Cys128, His159, and Cys162 each coordinate Zn(2+). The tract at residues 198 to 235 (QLPATKTEGKRKGEEVDGNVVAKKKSRKEKEKESKQEK) is disordered. 2 short sequence motifs (nuclear localization signal) span residues 207–209 (KRK) and 220–225 (KKKSRK). Residues 224 to 358 (RKEKEKESKQ…CKKQDRIFPP (135 aa)) enclose the PADR1 zinc-binding domain. The segment covering 225–235 (KEKEKESKQEK) has biased composition (basic and acidic residues). The zinc ribbon stretch occupies residues 289–331 (GALLPCEECKGQFVFKSDAYYCSGDITAWTKCVAKTQTPNRKD). Residues Cys294, Cys297, Cys310, and Cys320 each coordinate Zn(2+). A disordered region spans residues 359 to 378 (EAATVNSAPPPPASAPLTET). The automodification domain stretch occupies residues 371–522 (ASAPLTETVT…PSKSEKKMKL (152 aa)). The 92-residue stretch at 382–473 (PQDKPLTNMK…KGFQELLSLH (92 aa)) folds into the BRCT domain. 17 positions are modified to polyADP-ribosyl glutamic acid: Glu403, Glu404, Glu410, Glu411, Glu432, Glu434, Glu441, Glu442, Glu453, Glu454, Glu468, Glu481, Glu485, Glu488, Glu509, Glu510, and Glu517. Residues 496–519 (SKPANMKSAGKVKEEQGPSKSEKK) form a disordered region. Positions 506–519 (KVKEEQGPSKSEKK) are enriched in basic and acidic residues. The WGR domain maps to 539-635 (SAHVFEKGGK…KNFTKYPKKF (97 aa)). Residues 659–776 (KSKLAKPIQD…DIEVAYSLLR (118 aa)) enclose the PARP alpha-helical domain. A PARP catalytic domain is found at 785-1011 (DPIDINYEKL…LKFNYKTSLW (227 aa)). Residues 859 to 861 (HGS), Gly868, Arg875, and Ser901 each bind NAD(+). Residue Glu985 is the For poly [ADP-ribose] polymerase activity of the active site.

It belongs to the ARTD/PARP family. Homodimer; PARP-type zinc-fingers from separate parp1 molecules form a dimer module that specifically recognizes DNA strand breaks. In terms of processing, poly-ADP-ribosylated on serine, glutamate and aspartate residues by autocatalysis. Auto-ADP-ribosylation on serine takes place following interaction with HPF1. Auto poly-ADP-ribosylation on serine residues promotes its dissociation from chromatin.

It is found in the chromosome. Its subcellular location is the nucleus. The protein localises to the nucleolus. The protein resides in the cytoplasm. It localises to the cytosol. It catalyses the reaction NAD(+) + (ADP-D-ribosyl)n-acceptor = nicotinamide + (ADP-D-ribosyl)n+1-acceptor + H(+).. The enzyme catalyses L-seryl-[protein] + NAD(+) = O-(ADP-D-ribosyl)-L-seryl-[protein] + nicotinamide + H(+). It carries out the reaction L-aspartyl-[protein] + NAD(+) = 4-O-(ADP-D-ribosyl)-L-aspartyl-[protein] + nicotinamide. The catalysed reaction is L-glutamyl-[protein] + NAD(+) = 5-O-(ADP-D-ribosyl)-L-glutamyl-[protein] + nicotinamide. It catalyses the reaction L-tyrosyl-[protein] + NAD(+) = O-(ADP-D-ribosyl)-L-tyrosyl-[protein] + nicotinamide + H(+). The enzyme catalyses L-histidyl-[protein] + NAD(+) = N(tele)-(ADP-D-ribosyl)-L-histidyl-[protein] + nicotinamide + H(+). Its activity is regulated as follows. ADP-ribosyltransferase activity is regulated via an allosteric activation mechanism. In absence of activation signal, parp1 is autoinhibited by the PARP alpha-helical domain (also named HD region), which prevents effective NAD(+)-binding. Activity is highly stimulated by signals, such as DNA strand breaks. Binding to damaged DNA unfolds the PARP alpha-helical domain, relieving autoinhibition. Poly-ADP-ribosyltransferase activity is tightly regulated and parp1 is removed from damaged chromatin following initial poly-ADP-ribosylation of chromatin to avoid prolonged residence (trapping) that has cytotoxic consequences. A number of factors or post-translational modifications (auto-poly-ADP-ribosylation) promote parp1 removal from chromatin. Poly-ADP-ribosyltransferase that mediates poly-ADP-ribosylation of proteins and plays a key role in DNA repair. Mediates glutamate, aspartate, serine, histidine or tyrosine ADP-ribosylation of proteins: the ADP-D-ribosyl group of NAD(+) is transferred to the acceptor carboxyl group of target residues and further ADP-ribosyl groups are transferred to the 2'-position of the terminal adenosine moiety, building up a polymer with an average chain length of 20-30 units. Serine ADP-ribosylation of proteins constitutes the primary form of ADP-ribosylation of proteins in response to DNA damage. Specificity for the different amino acids is conferred by interacting factors, such as hpf1 and nmnat1. Following interaction with hpf1, catalyzes serine ADP-ribosylation of target proteins; hpf1 confers serine specificity by completing the parp1 active site. Also catalyzes tyrosine ADP-ribosylation of target proteins following interaction with hpf1. Following interaction with nmnat1, catalyzes glutamate and aspartate ADP-ribosylation of target proteins; nmnat1 confers glutamate and aspartate specificity. Parp1 initiates the repair of DNA breaks: recognizes and binds DNA breaks within chromatin and recruits hpf1, licensing serine ADP-ribosylation of target proteins, such as histones (H2BS6ADPr and H3S10ADPr), thereby promoting decompaction of chromatin and the recruitment of repair factors leading to the reparation of DNA strand breaks. In addition to base excision repair (BER) pathway, also involved in double-strand breaks (DSBs) repair. Mediates the poly-ADP-ribosylation of a number of proteins. In addition to proteins, also able to ADP-ribosylate DNA: catalyzes ADP-ribosylation of DNA strand break termini containing terminal phosphates and a 2'-OH group in single- and double-stranded DNA, respectively. Parp1-mediated DNA repair in neurons plays a role in sleep: senses DNA damage in neurons and promotes sleep, facilitating efficient DNA repair. In addition to DNA repair, also involved in other processes, such as transcription regulation, programmed cell death, membrane repair, adipogenesis and innate immunity. Acts as a repressor of transcription: binds to nucleosomes and modulates chromatin structure in a manner similar to histone H1, thereby altering RNA polymerase II. Acts both as a positive and negative regulator of transcription elongation, depending on the context. Poly-ADP-ribose chains generated by parp1 also play a role in poly-ADP-ribose-dependent cell death, a process named parthanatos. Also acts as a negative regulator of the cGAS-STING pathway by mediating poly-ADP-ribosylation and inactivation of cgas. Acts as a negative regulator of adipogenesis by catalyzing poly ADP-ribosylation of histone H2B on 'Glu-35' (H2BE35ADPr). The chain is Poly [ADP-ribose] polymerase 1 (PARP1) from Gallus gallus (Chicken).